A 122-amino-acid polypeptide reads, in one-letter code: Large ribosomal subunit protein uL18 (122 aa).

This sequence belongs to the universal ribosomal protein uL18 family. Part of the 50S ribosomal subunit; part of the 5S rRNA/L5/L18/L25 subcomplex. Contacts the 5S and 23S rRNAs.

This is one of the proteins that bind and probably mediate the attachment of the 5S RNA into the large ribosomal subunit, where it forms part of the central protuberance. This Prochlorococcus marinus (strain AS9601) protein is Large ribosomal subunit protein uL18.